A 266-amino-acid chain; its full sequence is Ras-like protein family member 12 (266 aa).

GTP is bound by residues 27–34 (GRRGAGKS), 74–78 (DTADL), and 134–137 (NKLD).

It belongs to the small GTPase superfamily. Ras family.

It carries out the reaction GTP + H2O = GDP + phosphate + H(+). The chain is Ras-like protein family member 12 (RASL12) from Homo sapiens (Human).